Consider the following 1411-residue polypeptide: Protein three rows (1411 aa).

The separase cleavage-site stretch occupies residues 1065-1071; the sequence is VEPIRKQ. 3 disordered regions span residues 1221–1240, 1268–1301, and 1330–1411; these read LEPP…NISP, VRPA…KSPK, and AKST…RHRN. 2 stretches are compositionally biased toward low complexity: residues 1270–1289 and 1386–1398; these read PASS…NASS and TAEQ…TATP.

As to quaternary structure, interacts with pim and Sse. Cleavage of thr contributes to inactivation of Sse.

The protein resides in the cytoplasm. Its function is as follows. Required specifically for chromosome disjunction during all mitoses; maternally provided protein is sufficient until mitosis 14 then zygotic protein is required. Involved in formation and/or maintenance of epithelial structures: bud extension during Malpighian tubule development, and foregut and hindgut morphogenesis. This Drosophila virilis (Fruit fly) protein is Protein three rows (thr).